A 211-amino-acid chain; its full sequence is Glycerol-3-phosphate acyltransferase (211 aa).

A run of 5 helical transmembrane segments spans residues 10–30, 63–83, 90–110, 126–146, and 152–172; these read FTTW…FGLL, ALTL…IKFL, NIFI…PVWL, LGLY…LFLI, and LSAL…YPYL.

Belongs to the PlsY family. In terms of assembly, probably interacts with PlsX.

Its subcellular location is the cell inner membrane. It catalyses the reaction an acyl phosphate + sn-glycerol 3-phosphate = a 1-acyl-sn-glycero-3-phosphate + phosphate. It functions in the pathway lipid metabolism; phospholipid metabolism. In terms of biological role, catalyzes the transfer of an acyl group from acyl-phosphate (acyl-PO(4)) to glycerol-3-phosphate (G3P) to form lysophosphatidic acid (LPA). This enzyme utilizes acyl-phosphate as fatty acyl donor, but not acyl-CoA or acyl-ACP. The sequence is that of Glycerol-3-phosphate acyltransferase from Bartonella henselae (strain ATCC 49882 / DSM 28221 / CCUG 30454 / Houston 1) (Rochalimaea henselae).